A 238-amino-acid chain; its full sequence is Ribonuclease PH (238 aa).

Residues Arg-86 and 124–126 (GTR) contribute to the phosphate site.

This sequence belongs to the RNase PH family. As to quaternary structure, homohexameric ring arranged as a trimer of dimers.

The catalysed reaction is tRNA(n+1) + phosphate = tRNA(n) + a ribonucleoside 5'-diphosphate. In terms of biological role, phosphorolytic 3'-5' exoribonuclease that plays an important role in tRNA 3'-end maturation. Removes nucleotide residues following the 3'-CCA terminus of tRNAs; can also add nucleotides to the ends of RNA molecules by using nucleoside diphosphates as substrates, but this may not be physiologically important. Probably plays a role in initiation of 16S rRNA degradation (leading to ribosome degradation) during starvation. In Aliivibrio salmonicida (strain LFI1238) (Vibrio salmonicida (strain LFI1238)), this protein is Ribonuclease PH.